We begin with the raw amino-acid sequence, 365 residues long: Ferrochelatase (365 aa).

Fe cation is bound by residues His-211 and Glu-292.

This sequence belongs to the ferrochelatase family.

The protein resides in the cytoplasm. It catalyses the reaction heme b + 2 H(+) = protoporphyrin IX + Fe(2+). Its pathway is porphyrin-containing compound metabolism; protoheme biosynthesis; protoheme from protoporphyrin-IX: step 1/1. Functionally, catalyzes the ferrous insertion into protoporphyrin IX. The protein is Ferrochelatase of Aromatoleum aromaticum (strain DSM 19018 / LMG 30748 / EbN1) (Azoarcus sp. (strain EbN1)).